The following is a 513-amino-acid chain: Ectonucleoside triphosphate diphosphohydrolase 1 (513 aa).

Topologically, residues 1–16 are cytoplasmic; sequence MEDRRESELKVFCSKN. A helical transmembrane segment spans residues 17–37; the sequence is ILSILGFSCIIAVIALLALGL. The Extracellular segment spans residues 38 to 481; it reads TQNKALPENV…SPPLPHSTYV (444 aa). N-linked (GlcNAc...) asparagine glycosylation occurs at N73. Residue E174 is the Proton acceptor of the active site. N227 and N245 each carry an N-linked (GlcNAc...) asparagine glycan. 2 disulfide bridges follow: C255–C300 and C281–C327. N-linked (GlcNAc...) asparagine glycosylation is found at N307 and N336. C340 and C345 form a disulfide bridge. N373 is a glycosylation site (N-linked (GlcNAc...) asparagine). Cysteines 393 and 416 form a disulfide. An N-linked (GlcNAc...) asparagine glycan is attached at N460. Residues 482–502 traverse the membrane as a helical segment; sequence FLMVLFSLILLAVIIVGIVVF. The Cytoplasmic portion of the chain corresponds to 503–513; the sequence is HKPSYFWKDMV.

It belongs to the GDA1/CD39 NTPase family. Homodimer; disulfide-linked. Ca(2+) is required as a cofactor. The cofactor is Mg(2+). N-glycosylated. Post-translationally, the N-terminus is blocked. In terms of processing, palmitoylated on Cys-13; which is required for caveola targeting.

The protein resides in the membrane. Its subcellular location is the caveola. The catalysed reaction is a ribonucleoside 5'-triphosphate + 2 H2O = a ribonucleoside 5'-phosphate + 2 phosphate + 2 H(+). It catalyses the reaction a ribonucleoside 5'-triphosphate + H2O = a ribonucleoside 5'-diphosphate + phosphate + H(+). It carries out the reaction a ribonucleoside 5'-diphosphate + H2O = a ribonucleoside 5'-phosphate + phosphate + H(+). The enzyme catalyses ATP + 2 H2O = AMP + 2 phosphate + 2 H(+). The catalysed reaction is ATP + H2O = ADP + phosphate + H(+). It catalyses the reaction ADP + H2O = AMP + phosphate + H(+). It carries out the reaction CTP + 2 H2O = CMP + 2 phosphate + 2 H(+). The enzyme catalyses CTP + H2O = CDP + phosphate + H(+). The catalysed reaction is CDP + H2O = CMP + phosphate + H(+). It catalyses the reaction GTP + 2 H2O = GMP + 2 phosphate + 2 H(+). It carries out the reaction GTP + H2O = GDP + phosphate + H(+). The enzyme catalyses GDP + H2O = GMP + phosphate + H(+). The catalysed reaction is ITP + 2 H2O = IMP + 2 phosphate + 2 H(+). It catalyses the reaction ITP + H2O = IDP + phosphate + H(+). It carries out the reaction IDP + H2O = IMP + phosphate + H(+). The enzyme catalyses UTP + 2 H2O = UMP + 2 phosphate + 2 H(+). The catalysed reaction is UTP + H2O = UDP + phosphate + H(+). It catalyses the reaction UDP + H2O = UMP + phosphate + H(+). Catalyzes the hydrolysis of both di- and triphosphate nucleotides (NDPs and NTPs) and hydrolyze NTPs to nucleotide monophosphates (NMPs) in two distinct successive phosphate-releasing steps, with NDPs as intermediates and participates in the regulation of extracellular levels of nucleotides. By hydrolyzing proinflammatory ATP and platelet-activating ADP to AMP, it blocks platelet aggregation and supports blood flow. The sequence is that of Ectonucleoside triphosphate diphosphohydrolase 1 from Bos taurus (Bovine).